The sequence spans 339 residues: MEAKLKQLEEKAKQDIQASTSTDSLEKVRVKYLGKKGELTEVLRGMGSLSKEERPLVGKIANLVREQIEEALELAKGAVKDKELESKLKMESLDVTMPGKTREIGKRHPLIQAMDELKSIFIGMGFKVAEGPEVETVHYNFDALNAAPNHPSRDMSDTFYINDHIILRTQTSPVQVRTMELQKPPIRIISPGRCFRNDTPDATHTPMFHQLEGLVVDKGITLGDLKGTLEVFIKQFFGNDTKVKFRPHHFPFTEPSAEVDVTCFKCAGHGCSMCKGEGWIELLGAGMVHPNVLRNCGIDPEIYSGFAFGMGIDRLTMAKYEIDDIRLLFENDMRFINQF.

Positions 1-14 (MEAKLKQLEEKAKQ) are enriched in basic and acidic residues. Positions 1–20 (MEAKLKQLEEKAKQDIQAST) are disordered. Residue Glu254 coordinates Mg(2+).

Belongs to the class-II aminoacyl-tRNA synthetase family. Phe-tRNA synthetase alpha subunit type 1 subfamily. Tetramer of two alpha and two beta subunits. It depends on Mg(2+) as a cofactor.

Its subcellular location is the cytoplasm. The catalysed reaction is tRNA(Phe) + L-phenylalanine + ATP = L-phenylalanyl-tRNA(Phe) + AMP + diphosphate + H(+). This is Phenylalanine--tRNA ligase alpha subunit from Alkaliphilus metalliredigens (strain QYMF).